The following is a 523-amino-acid chain: Cryptochrome DASH (523 aa).

The Photolyase/cryptochrome alpha/beta domain maps to R6–L142. 2 disordered regions span residues R174–R211 and K486–V523. Residues R496–N510 show a composition bias toward basic residues.

The protein belongs to the DNA photolyase class-1 family. The cofactor is FAD. Requires (6R)-5,10-methylene-5,6,7,8-tetrahydrofolate as cofactor.

In terms of biological role, may have a photoreceptor function. Has weak cyclobutyl pyrimidine photolyase activity when expressed in E.coli and when tested in vitro. This chain is Cryptochrome DASH (cry-dash), found in Xenopus laevis (African clawed frog).